The primary structure comprises 355 residues: Molybdenum import ATP-binding protein ModC (355 aa).

Residues 1-233 (MTLIVEAKQR…PSTASDRREA (233 aa)) enclose the ABC transporter domain. 31–38 (GRSGSGKT) lines the ATP pocket. The region spanning 291–355 (GLSALNILEA…AIIKTVALEA (65 aa)) is the Mop domain.

Belongs to the ABC transporter superfamily. Molybdate importer (TC 3.A.1.8) family. In terms of assembly, the complex is composed of two ATP-binding proteins (ModC), two transmembrane proteins (ModB) and a solute-binding protein (ModA).

The protein resides in the cell inner membrane. It carries out the reaction molybdate(out) + ATP + H2O = molybdate(in) + ADP + phosphate + H(+). Functionally, part of the ABC transporter complex ModABC involved in molybdenum import. Responsible for energy coupling to the transport system. This Rhizobium johnstonii (strain DSM 114642 / LMG 32736 / 3841) (Rhizobium leguminosarum bv. viciae) protein is Molybdenum import ATP-binding protein ModC.